Here is a 60-residue protein sequence, read N- to C-terminus: Large ribosomal subunit protein bL32 (60 aa).

The protein belongs to the bacterial ribosomal protein bL32 family.

In Borreliella burgdorferi (strain ATCC 35210 / DSM 4680 / CIP 102532 / B31) (Borrelia burgdorferi), this protein is Large ribosomal subunit protein bL32 (rpmF).